The primary structure comprises 139 residues: ATP synthase epsilon chain (139 aa).

Belongs to the ATPase epsilon chain family. As to quaternary structure, F-type ATPases have 2 components, CF(1) - the catalytic core - and CF(0) - the membrane proton channel. CF(1) has five subunits: alpha(3), beta(3), gamma(1), delta(1), epsilon(1). CF(0) has three main subunits: a, b and c.

The protein resides in the cell inner membrane. In terms of biological role, produces ATP from ADP in the presence of a proton gradient across the membrane. This Pectobacterium carotovorum subsp. carotovorum (strain PC1) protein is ATP synthase epsilon chain.